Reading from the N-terminus, the 356-residue chain is Guanine nucleotide-binding protein alpha-2 subunit (356 aa).

Positions 1–25 are disordered; it reads MGLCQSEEEKVGSQKSRAIDKEIKQ. Gly2 carries N-myristoyl glycine lipidation. A lipid anchor (S-palmitoyl cysteine) is attached at Cys4. A compositionally biased stretch (basic and acidic residues) spans 7 to 25; sequence EEEKVGSQKSRAIDKEIKQ. The 325-residue stretch at 14-338 folds into the G-alpha domain; the sequence is QKSRAIDKEI…TDTNQVQKIL (325 aa). The interval 17–30 is G1 motif; it reads RAIDKEIKQNQSND. Residues Gln25, Gln27, Ser28, Asn29, Asp30, Val135, Glu160, Ala166, Val188, Glu254, Ser255, Cys257, and Phe310 each contribute to the GTP site. Asn29 is a Mg(2+) binding site. Positions 158–166 are G2 motif; that stretch reads FFENLDRIA. Residue Ala166 participates in Mg(2+) binding. Residues 181–190 are G3 motif; that stretch reads RTKTTGIVEV. The interval 250 to 257 is G4 motif; sequence MRLFESIC. The tract at residues 308–313 is G5 motif; that stretch reads QKFEAL.

This sequence belongs to the G-alpha family. G(q) subfamily. G proteins are composed of 3 units; alpha, beta and gamma. The alpha chain contains the guanine nucleotide binding site. Requires Mg(2+) as cofactor.

Its function is as follows. Guanine nucleotide-binding proteins (G proteins) are involved as modulators or transducers in various transmembrane signaling systems. Involved in behavioral responses to P.aeruginosa by controlling the expression of daf-7, a member of the TGF-beta family, in ASJ sensory neurons. The chain is Guanine nucleotide-binding protein alpha-2 subunit (gpa-2) from Caenorhabditis briggsae.